The sequence spans 123 residues: Small ribosomal subunit protein uS13 (123 aa).

The segment at 95 to 123 (GLPVRGQKTKTNARTRKGPKKAVASKKKK) is disordered.

Belongs to the universal ribosomal protein uS13 family. Part of the 30S ribosomal subunit. Forms a loose heterodimer with protein S19. Forms two bridges to the 50S subunit in the 70S ribosome.

Its function is as follows. Located at the top of the head of the 30S subunit, it contacts several helices of the 16S rRNA. In the 70S ribosome it contacts the 23S rRNA (bridge B1a) and protein L5 of the 50S subunit (bridge B1b), connecting the 2 subunits; these bridges are implicated in subunit movement. Contacts the tRNAs in the A and P-sites. The protein is Small ribosomal subunit protein uS13 of Clostridium acetobutylicum (strain ATCC 824 / DSM 792 / JCM 1419 / IAM 19013 / LMG 5710 / NBRC 13948 / NRRL B-527 / VKM B-1787 / 2291 / W).